A 398-amino-acid chain; its full sequence is Tryptophan synthase beta chain (398 aa).

An N6-(pyridoxal phosphate)lysine modification is found at Lys88.

This sequence belongs to the TrpB family. In terms of assembly, tetramer of two alpha and two beta chains. Requires pyridoxal 5'-phosphate as cofactor.

It catalyses the reaction (1S,2R)-1-C-(indol-3-yl)glycerol 3-phosphate + L-serine = D-glyceraldehyde 3-phosphate + L-tryptophan + H2O. It functions in the pathway amino-acid biosynthesis; L-tryptophan biosynthesis; L-tryptophan from chorismate: step 5/5. Its function is as follows. The beta subunit is responsible for the synthesis of L-tryptophan from indole and L-serine. The protein is Tryptophan synthase beta chain of Mannheimia succiniciproducens (strain KCTC 0769BP / MBEL55E).